The sequence spans 242 residues: Glutathione S-transferase 3 (242 aa).

In terms of domain architecture, GST N-terminal spans 1-79 (MIVLHHLKNS…HLVRKYGPSF (79 aa)). The 150-residue stretch at 85 to 234 (DVAELEKYEL…ERYSHPPTPP (150 aa)) folds into the GST C-terminal domain. Ser228 carries the phosphoserine modification. Thr232 carries the post-translational modification Phosphothreonine.

This sequence belongs to the GST superfamily. In terms of assembly, interacts with sad1.

It localises to the cytoplasm. The enzyme catalyses RX + glutathione = an S-substituted glutathione + a halide anion + H(+). In terms of biological role, may have a role in the detoxification of various heavy metals. This chain is Glutathione S-transferase 3 (gst3), found in Schizosaccharomyces pombe (strain 972 / ATCC 24843) (Fission yeast).